A 421-amino-acid chain; its full sequence is tRNA (guanine(37)-N(1))-methyltransferase (421 aa).

Residues Arg-198, 242-243 (DL), 270-271 (DA), and Asn-293 contribute to the S-adenosyl-L-methionine site.

This sequence belongs to the class I-like SAM-binding methyltransferase superfamily. TRM5/TYW2 family. As to quaternary structure, monomer.

The protein localises to the mitochondrion matrix. It is found in the nucleus. It localises to the cytoplasm. The catalysed reaction is guanosine(37) in tRNA + S-adenosyl-L-methionine = N(1)-methylguanosine(37) in tRNA + S-adenosyl-L-homocysteine + H(+). In terms of biological role, specifically methylates the N1 position of guanosine-37 in various cytoplasmic and mitochondrial tRNAs. Methylation is not dependent on the nature of the nucleoside 5' of the target nucleoside. This is the first step in the biosynthesis of wybutosine (yW), a modified base adjacent to the anticodon of tRNAs and required for accurate decoding. In Paramecium tetraurelia, this protein is tRNA (guanine(37)-N(1))-methyltransferase.